We begin with the raw amino-acid sequence, 154 residues long: Xanthine-guanine phosphoribosyltransferase (154 aa).

5-phospho-alpha-D-ribose 1-diphosphate-binding positions include 37–38 and 90–98; these read RG and DDLVDTGNT. D91 provides a ligand contact to Mg(2+). Guanine-binding residues include D94 and I137. The xanthine site is built by D94 and I137. Residues 94 to 98 and 136 to 137 each bind GMP; these read DTGNT and WI.

The protein belongs to the purine/pyrimidine phosphoribosyltransferase family. XGPT subfamily. Homotetramer. Mg(2+) serves as cofactor.

The protein localises to the cell inner membrane. The catalysed reaction is GMP + diphosphate = guanine + 5-phospho-alpha-D-ribose 1-diphosphate. The enzyme catalyses XMP + diphosphate = xanthine + 5-phospho-alpha-D-ribose 1-diphosphate. It carries out the reaction IMP + diphosphate = hypoxanthine + 5-phospho-alpha-D-ribose 1-diphosphate. Its pathway is purine metabolism; GMP biosynthesis via salvage pathway; GMP from guanine: step 1/1. The protein operates within purine metabolism; XMP biosynthesis via salvage pathway; XMP from xanthine: step 1/1. Its function is as follows. Purine salvage pathway enzyme that catalyzes the transfer of the ribosyl-5-phosphate group from 5-phospho-alpha-D-ribose 1-diphosphate (PRPP) to the N9 position of the 6-oxopurines guanine and xanthine to form the corresponding ribonucleotides GMP (guanosine 5'-monophosphate) and XMP (xanthosine 5'-monophosphate), with the release of PPi. To a lesser extent, also acts on hypoxanthine. This is Xanthine-guanine phosphoribosyltransferase from Histophilus somni (strain 129Pt) (Haemophilus somnus).